A 139-amino-acid polypeptide reads, in one-letter code: Large ribosomal subunit protein uL16 (139 aa).

Residues 1–19 (MLIPRKVKHRKQHHPKRSG) show a composition bias toward basic residues. The interval 1–22 (MLIPRKVKHRKQHHPKRSGVAK) is disordered.

It belongs to the universal ribosomal protein uL16 family. Part of the 50S ribosomal subunit.

Its function is as follows. Binds 23S rRNA and is also seen to make contacts with the A and possibly P site tRNAs. The chain is Large ribosomal subunit protein uL16 from Acidothermus cellulolyticus (strain ATCC 43068 / DSM 8971 / 11B).